We begin with the raw amino-acid sequence, 146 residues long: UPF0306 protein CKO_04548 (146 aa).

This sequence belongs to the UPF0306 family.

This Citrobacter koseri (strain ATCC BAA-895 / CDC 4225-83 / SGSC4696) protein is UPF0306 protein CKO_04548.